Reading from the N-terminus, the 417-residue chain is MFSKQDQIQGYDDALLAAINAEEQRQEDHIELIASENYTSKRVMQAQGSGLTNKYAEGYPGKRYYGGCEHVDKVEALAIERAKQLFGADYANVQPHSGSSANSEVYLALLQAGDTILGMSLAHGGHLTHGAKVSSSGKLYNAVQYGIDTRTGLIDYDEVERLAVEHKPKMIVAGFSAYSKTLDFPRFRQIADKVGALLFVDMAHVAGLVAAGLYPNPLPYADVVTTTTHKTLRGPRGGLILAKANEEIEKKLNAAVFPGAQGGPLMHVIAAKAVCFKEALEPGFKAYQQQVIDNAQAMAGVFIKRGYDVVSGGTDNHLFLVSLIRQGLTGKDADAALGRAHITVNKNAVPNDPQSPFVTSGLRIGTPAVTTRGFKVTQCTELAGWICDILDHLGDADVEANVARQVAALCADFPVYR.

(6S)-5,6,7,8-tetrahydrofolate contacts are provided by residues L121 and 125-127 (GHL). K230 bears the N6-(pyridoxal phosphate)lysine mark. 355-357 (SPF) contributes to the (6S)-5,6,7,8-tetrahydrofolate binding site.

This sequence belongs to the SHMT family. As to quaternary structure, homodimer. It depends on pyridoxal 5'-phosphate as a cofactor.

The protein resides in the cytoplasm. It catalyses the reaction (6R)-5,10-methylene-5,6,7,8-tetrahydrofolate + glycine + H2O = (6S)-5,6,7,8-tetrahydrofolate + L-serine. It functions in the pathway one-carbon metabolism; tetrahydrofolate interconversion. Its pathway is amino-acid biosynthesis; glycine biosynthesis; glycine from L-serine: step 1/1. Functionally, catalyzes the reversible interconversion of serine and glycine with tetrahydrofolate (THF) serving as the one-carbon carrier. This reaction serves as the major source of one-carbon groups required for the biosynthesis of purines, thymidylate, methionine, and other important biomolecules. Also exhibits THF-independent aldolase activity toward beta-hydroxyamino acids, producing glycine and aldehydes, via a retro-aldol mechanism. The chain is Serine hydroxymethyltransferase 2 from Pseudomonas fluorescens (strain ATCC BAA-477 / NRRL B-23932 / Pf-5).